Reading from the N-terminus, the 260-residue chain is tRNA pseudouridine synthase B (260 aa).

H44 contacts substrate. D49 (nucleophile) is an active-site residue. Residues Y77, Y180, and L201 each coordinate substrate.

The protein belongs to the pseudouridine synthase TruB family. Type 1 subfamily.

It carries out the reaction uridine(55) in tRNA = pseudouridine(55) in tRNA. In terms of biological role, responsible for synthesis of pseudouridine from uracil-55 in the psi GC loop of transfer RNAs. The chain is tRNA pseudouridine synthase B from Blochmanniella pennsylvanica (strain BPEN).